The chain runs to 132 residues: uncharacterized protein (132 aa).

The signal sequence occupies residues 1 to 24 (MVTIGSSSLVLFLFFVVFVQITYT). 2 consecutive transmembrane segments (helical) span residues 75–95 (YVNVEIIVGIPLLIKAIILGI) and 112–132 (ESAILHNSINIIIIILYVYIH).

It is found in the membrane. This is an uncharacterized protein from Saccharomyces cerevisiae (strain ATCC 204508 / S288c) (Baker's yeast).